Consider the following 198-residue polypeptide: Ribonuclease HII (198 aa).

In terms of domain architecture, RNase H type-2 spans 10 to 198; it reads HLVAGVDEVG…PVKRALGLAS (189 aa). Residues aspartate 16, glutamate 17, and aspartate 108 each coordinate a divalent metal cation.

The protein belongs to the RNase HII family. Mn(2+) is required as a cofactor. Requires Mg(2+) as cofactor.

The protein resides in the cytoplasm. The catalysed reaction is Endonucleolytic cleavage to 5'-phosphomonoester.. Endonuclease that specifically degrades the RNA of RNA-DNA hybrids. This is Ribonuclease HII from Escherichia coli (strain ATCC 8739 / DSM 1576 / NBRC 3972 / NCIMB 8545 / WDCM 00012 / Crooks).